The primary structure comprises 345 residues: Selenide, water dikinase (345 aa).

Cys15 is a catalytic residue. ATP contacts are provided by residues Lys18 and 46–48 (SKD). Asp49 contributes to the Mg(2+) binding site. Residues Asp66, Asp89, and 137 to 139 (GHS) each bind ATP. Asp89 contacts Mg(2+). Residue Asp225 coordinates Mg(2+).

The protein belongs to the selenophosphate synthase 1 family. Class I subfamily. Homodimer. It depends on Mg(2+) as a cofactor.

The enzyme catalyses hydrogenselenide + ATP + H2O = selenophosphate + AMP + phosphate + 2 H(+). Functionally, synthesizes selenophosphate from selenide and ATP. In Aeromonas hydrophila subsp. hydrophila (strain ATCC 7966 / DSM 30187 / BCRC 13018 / CCUG 14551 / JCM 1027 / KCTC 2358 / NCIMB 9240 / NCTC 8049), this protein is Selenide, water dikinase.